The chain runs to 308 residues: Elongation factor Ts (308 aa).

The segment at 79–82 (TDFV) is involved in Mg(2+) ion dislocation from EF-Tu.

The protein belongs to the EF-Ts family.

It is found in the cytoplasm. Associates with the EF-Tu.GDP complex and induces the exchange of GDP to GTP. It remains bound to the aminoacyl-tRNA.EF-Tu.GTP complex up to the GTP hydrolysis stage on the ribosome. The sequence is that of Elongation factor Ts from Bdellovibrio bacteriovorus (strain ATCC 15356 / DSM 50701 / NCIMB 9529 / HD100).